A 310-amino-acid polypeptide reads, in one-letter code: Pyrimidine-specific ribonucleoside hydrolase RihA (310 aa).

The active site involves histidine 240.

It belongs to the IUNH family. RihA subfamily.

In terms of biological role, hydrolyzes cytidine or uridine to ribose and cytosine or uracil, respectively. The chain is Pyrimidine-specific ribonucleoside hydrolase RihA from Photobacterium profundum (strain SS9).